We begin with the raw amino-acid sequence, 347 residues long: Protein RecA (347 aa).

65–72 (GPESSGKT) lines the ATP pocket. The segment at 328 to 347 (SPAQPEAPAAGEKPEQEEEF) is disordered.

The protein belongs to the RecA family.

Its subcellular location is the cytoplasm. Its function is as follows. Can catalyze the hydrolysis of ATP in the presence of single-stranded DNA, the ATP-dependent uptake of single-stranded DNA by duplex DNA, and the ATP-dependent hybridization of homologous single-stranded DNAs. It interacts with LexA causing its activation and leading to its autocatalytic cleavage. This Vibrio parahaemolyticus serotype O3:K6 (strain RIMD 2210633) protein is Protein RecA.